We begin with the raw amino-acid sequence, 834 residues long: Taste receptor type 1 member 2 (834 aa).

Positions 1–19 (MEPRVRTVCFLFFLLRVLA) are cleaved as a signal peptide. The Extracellular portion of the chain corresponds to 20-561 (EPAKNSDFYL…SFLEWHEAAT (542 aa)). N-linked (GlcNAc...) asparagine glycosylation is found at N84, N292, N312, N363, N423, N482, and N522. The chain crosses the membrane as a helical span at residues 562 to 582 (IAVALLAALGFLSTLAILVIF). Topologically, residues 583–597 (WRHFETPMVRSAGGP) are cytoplasmic. A helical transmembrane segment spans residues 598–618 (MCFLMLTLLLVAYMVVPVYVG). The Extracellular segment spans residues 619–630 (LPKVSTCLCRQA). Residues 631–651 (LFPVCFTICISCIAVRSFQIV) form a helical membrane-spanning segment. The Cytoplasmic segment spans residues 652-676 (CVFKMASRFPRAYSYWVRYQGSYVS). A helical transmembrane segment spans residues 677-697 (VAFITALKMVTVVISLLATGL). The Extracellular portion of the chain corresponds to 698-722 (NPTTRTDTDDPKIMIISCNPNYRNS). Residues 723-743 (LLFNTSLDLLLSVAGFSFAYM) traverse the membrane as a helical segment. Over 744–755 (GKELPTNYNEAK) the chain is Cytoplasmic. Residues 756-776 (FITFSMTFYFTSSVSLCTFMS) form a helical membrane-spanning segment. Over 777–779 (VYD) the chain is Extracellular. Residues 780–800 (GVLVTIVDLLVTVFNLLAISL) traverse the membrane as a helical segment. Over 801 to 834 (GYFGPKCYMILFYPERNTPAYFNSMIQGYTMRRD) the chain is Cytoplasmic.

It belongs to the G-protein coupled receptor 3 family. TAS1R subfamily. In terms of assembly, forms heterodimers with TAS1R3.

Its subcellular location is the cell membrane. Functionally, putative taste receptor. TAS1R2/TAS1R3 recognizes diverse natural and synthetic sweeteners. This is Taste receptor type 1 member 2 (TAS1R2) from Saimiri sciureus (Common squirrel monkey).